Consider the following 428-residue polypeptide: Glutamate-1-semialdehyde 2,1-aminomutase (428 aa).

At Lys265 the chain carries N6-(pyridoxal phosphate)lysine.

This sequence belongs to the class-III pyridoxal-phosphate-dependent aminotransferase family. HemL subfamily. Homodimer. Pyridoxal 5'-phosphate serves as cofactor.

The protein localises to the cytoplasm. The catalysed reaction is (S)-4-amino-5-oxopentanoate = 5-aminolevulinate. Its pathway is porphyrin-containing compound metabolism; protoporphyrin-IX biosynthesis; 5-aminolevulinate from L-glutamyl-tRNA(Glu): step 2/2. This is Glutamate-1-semialdehyde 2,1-aminomutase from Shewanella sediminis (strain HAW-EB3).